Reading from the N-terminus, the 8886-residue chain is Obscurin (8886 aa).

Ig-like domains lie at 9–99 (PRFL…LRVD), 109–201 (PHFL…LVVD), 234–320 (PPSP…QTYS), and 329–415 (PTVP…AELS). A disulfide bond links Cys30 and Cys81. Residues 135-165 (SPQPAVSWSKDGRRLGPPDAPHVRVEEHGES) form a disordered region. The span at 144 to 164 (KDGRRLGPPDAPHVRVEEHGE) shows a compositional bias: basic and acidic residues. Disulfide bonds link Cys257-Cys309 and Cys352-Cys402. At Ser393 the chain carries Phosphoserine. The region spanning 513-610 (PPADPVVKAK…FPGTMHLVPM (98 aa)) is the Fibronectin type-III 1 domain. 43 consecutive Ig-like domains span residues 702–793 (PSSK…QDIT), 859–951 (PKLV…VAEP), 951–1043 (PKLV…VAEP), 1043–1135 (PKMV…VTEP), 1135–1227 (PKLV…VAEP), 1227–1319 (PKLV…VTEP), 1319–1407 (PKLV…FRLD), 1411–1503 (PKLV…VAEP), 1503–1595 (PKLV…VAEP), 1595–1687 (PKLA…VAEP), 1687–1779 (PKLA…VAEP), 1779–1871 (PKLA…VAEP), 1871–1963 (PKLM…VAEP), 1963–2051 (PKLV…FRLD), 2055–2147 (TRLM…VAEA), 2152–2241 (PERP…EEVA), 2242–2325 (AKFS…ARLT), 2329–2415 (PRVV…AALR), 2420–2504 (PVLF…AKLN), 2598–2681 (PVSF…ASLR), 2721–2812 (PVTL…QSIT), 2900–2984 (PVVL…AEVT), 3078–3162 (PVVF…SKVS), 3258–3342 (PVDI…AKLC), 3348–3431 (NRFT…ARLL), 3527–3610 (PSIF…SSIV), 3616–3700 (PVRF…ATLT), 3785–3876 (ATLT…ATLT), 3881–3964 (PAKF…ATLT), 4042–4125 (PTKF…ATLS), 4130–4213 (PSRF…ATLS), 4219–4301 (PRFI…ATLN), 4307–4389 (PRFI…AVLT), 4395–4477 (PKFT…ATLS), 4483–4565 (PRFI…ATLS), 4571–4653 (PRFI…ATLS), 4659–4741 (PRFI…ATLS), 4746–4829 (PAKF…ATLS), 4833–4916 (PQVV…TSAT), 4923–5007 (PVRF…ARLS), 5013–5105 (PKFK…PEVT), 5378–5464 (LEVL…ARLS), and 5557–5659 (PQMV…TFNV). 14 cysteine pairs are disulfide-bonded: Cys885–Cys935, Cys977–Cys1027, Cys1069–Cys1119, Cys1161–Cys1211, Cys1253–Cys1303, Cys1345–Cys1395, Cys1437–Cys1487, Cys1529–Cys1579, Cys1621–Cys1671, Cys1713–Cys1763, Cys1805–Cys1855, Cys1897–Cys1947, Cys1989–Cys2039, and Cys2081–Cys2131. Cys2263 and Cys2313 are disulfide-bonded. Intrachain disulfides connect Cys2620–Cys2669, Cys2743–Cys2793, Cys2922–Cys2972, Cys3100–Cys3150, Cys3280–Cys3330, Cys3369–Cys3419, Cys3549–Cys3599, and Cys3638–Cys3688. Ser3321 bears the Phosphoserine mark. Ser3802 carries the post-translational modification Phosphoserine. 14 cysteine pairs are disulfide-bonded: Cys3815-Cys3864, Cys3903-Cys3952, Cys4064-Cys4113, Cys4152-Cys4201, Cys4240-Cys4289, Cys4328-Cys4377, Cys4416-Cys4465, Cys4504-Cys4553, Cys4592-Cys4641, Cys4680-Cys4729, Cys4768-Cys4817, Cys4856-Cys4906, Cys4945-Cys4995, and Cys5034-Cys5086. Ser4960 carries the post-translational modification Phosphoserine. The region spanning 5471–5569 (PPEDAEVVGR…VKIAPAPAPA (99 aa)) is the Fibronectin type-III 2 domain. Cys5590 and Cys5643 are joined by a disulfide. A Phosphoserine modification is found at Ser5699. The interval 5700 to 5736 (REPTLDSISELPEEDSRVQHLRQEAEETAPDLSEGYS) is disordered. Position 5703 is a phosphothreonine (Thr5703). Residue Ser5706 is modified to Phosphoserine. Over residues 5713–5724 (EDSRVQHLRQEA) the composition is skewed to basic and acidic residues. At Thr5737 the chain carries Phosphothreonine. Position 5754 is a phosphoserine (Ser5754). One can recognise an IQ domain in the interval 5821–5850 (LDKAAVKIQAAFKGYKVRKEMKQQEGPVFS). Positions 5847-5930 (PVFSRTFGDT…QVSTKSGRVS (84 aa)) constitute an Ig-like 48 domain. An intrachain disulfide couples Cys5868 to Cys5920. The interval 5977 to 5996 (EEELFLSADEGPGEPEEPAD) is disordered. 3 consecutive Ig-like domains span residues 6077 to 6166 (PVFL…AELR), 6209 to 6298 (PQVL…ARLL), and 6320 to 6416 (PRIL…LHIS). An intrachain disulfide couples Cys6098 to Cys6150. A disordered region spans residues 6504–6546 (KLQVPGGDSDEETKTPSASPRHGRSRPSSSVQESSSESEDGDS). Residue Ser6512 is modified to Phosphoserine. Thr6518 bears the Phosphothreonine mark. Low complexity predominate over residues 6519-6538 (PSASPRHGRSRPSSSVQESS). Phosphoserine is present on residues Ser6520 and Ser6522. In terms of domain architecture, SH3 spans 6549-6616 (EIFDIYVVTA…SPAYLDKRLK (68 aa)). The region spanning 6642 to 6826 (RLSSVIQELL…SALPQRAENK (185 aa)) is the DH domain. The PH domain occupies 6844 to 6953 (EPIRQGHFIV…WVKEICGIQQ (110 aa)). Arg6924 serves as a coordination point for a 1,2-diacyl-sn-glycero-3-phospho-(1D-myo-inositol-4,5-bisphosphate). Arg6929 is an a 1,2-diacyl-sn-glycero-3-phospho-(1D-myo-inositol-3,4-bisphosphate) binding site. 2 consecutive Ig-like domains span residues 6963 to 7046 (PEFE…GNAS) and 7057 to 7147 (PRFV…GELY). Cystine bridges form between Cys6984-Cys7036 and Cys7078-Cys7131. The interval 7200 to 7257 (ALGPSPGDLPNTRQSEPPAFEEAASQIPGAASGTPEVSQPGTHKGLEQETTSSGSQGW) is disordered. The segment covering 7247-7257 (QETTSSGSQGW) has biased composition (polar residues). The 89-residue stretch at 7306–7394 (PSMQVTIEDV…GQVLCKAELL (89 aa)) folds into the Ig-like 54 domain. The 254-residue stretch at 7416–7669 (YDVQEEIGRG…TSQCLAHPWF (254 aa)) folds into the Protein kinase 1 domain. Residues 7422–7430 (IGRGVFGFV) and Lys7445 each bind ATP. Residue Asp7535 is the Proton acceptor of the active site. Disordered stretches follow at residues 7717 to 7810 (GPPD…SPGC), 7879 to 8106 (EQAS…TTRK), and 8150 to 8180 (SSEEQDEAATESPQPLESLGPIAEASGVPLR). Ser7779 is modified (phosphoserine). A compositionally biased stretch (low complexity) spans 7793 to 7804 (AAVPASPQSAGP). Positions 7941 to 7952 (TTAKDRGHKEGF) are enriched in basic and acidic residues. The segment covering 7986–7996 (SCHSELGSGSQ) has biased composition (polar residues). 2 stretches are compositionally biased toward low complexity: residues 8000 to 8014 (GPPSSQSLGSLPPQS) and 8053 to 8073 (GSLSEGPVPVPSSSPGSASQV). Ser8161 is modified (phosphoserine). The 85-residue stretch at 8380-8464 (KGRDQELSDE…VSNPLGTAVT (85 aa)) folds into the Ig-like 55 domain. Cysteines 8401 and 8453 form a disulfide. Positions 8474–8566 (PSSSPRPEVG…PSEQVLLGGP (93 aa)) constitute a Fibronectin type-III 3 domain. A Protein kinase 2 domain is found at 8590–8842 (FAFQMQIRRG…ASTCLQCGWL (253 aa)). Residues 8596-8604 (IRRGRFSVV) and Lys8619 contribute to the ATP site. The Proton acceptor role is filled by Asp8709.

It belongs to the protein kinase superfamily. CAMK Ser/Thr protein kinase family. Interacts (via protein kinase domain 1) with CDH2 and (via protein kinase domain 1) with ATP1B1. Isoform 2 is found in a complex with DSG2, DESM, GJA1, CDH2 and VCL. Isoform 3 is found in a complex with DSG2, DESM, GJA1, CDH2, ANK3 and VCL. The cofactor is Mg(2+). In terms of processing, autophosphorylated by protein kinase domain 1 and 2. Two small isoforms, one probably containing protein kinase domain 2 and a partial protein kinase domain 1 and one containing only protein kinase domain 2, are glycosylated. In terms of tissue distribution, expressed in skeletal muscles including flexor digitorum brevis (FDB), soleus and tibialis anterior muscles, and to a lesser extent in heart muscles (at protein level). Isoform 2 and isoform 3 are expressed in the myocardium (at protein level).

The protein resides in the cytoplasm. The protein localises to the myofibril. It is found in the sarcomere. Its subcellular location is the m line. It localises to the z line. The protein resides in the cell membrane. The protein localises to the sarcolemma. It is found in the nucleus. Its subcellular location is the secreted. The catalysed reaction is L-seryl-[protein] + ATP = O-phospho-L-seryl-[protein] + ADP + H(+). It carries out the reaction L-threonyl-[protein] + ATP = O-phospho-L-threonyl-[protein] + ADP + H(+). Functionally, structural component of striated muscles which plays a role in myofibrillogenesis. Probably involved in the assembly of myosin into sarcomeric A bands in striated muscle. Has serine/threonine protein kinase activity and phosphorylates N-cadherin CDH2 and sodium/potassium-transporting ATPase subunit ATP1B1. Binds (via the PH domain) strongly to phosphatidylinositol 3,4-bisphosphate (PtdIns(3,4)P2) and phosphatidylinositol 4,5-bisphosphate (PtdIns(4,5)P2), and to a lesser extent to phosphatidylinositol 3-phosphate (PtdIns(3)P), phosphatidylinositol 4-phosphate (PtdIns(4)P), phosphatidylinositol 5-phosphate (PtdIns(5)P) and phosphatidylinositol 3,4,5-trisphosphate (PtdIns(3,4,5)P3). Isoform 2 and isoform 3: bind phosphatidylinositol bisphosphates (PIP2s) via their PH domains and negatively regulate the PI3K/AKT/mTOR signaling pathway, thus contributing to the regulation of cardiomyocyte size and adhesion. The polypeptide is Obscurin (Mus musculus (Mouse)).